An 88-amino-acid polypeptide reads, in one-letter code: PTS system cellobiose-specific EIIB component (88 aa).

Residues 3–88 (KKRIYLFCSA…IDTLLYGKVD (86 aa)) enclose the PTS EIIB type-3 domain. The active-site Phosphocysteine intermediate is Cys10. Cys10 is modified (phosphocysteine; by EIIA).

It localises to the cytoplasm. It carries out the reaction D-cellobiose(out) + N(pros)-phospho-L-histidyl-[protein] = 6-phospho-beta-D-glucosyl-(1-&gt;4)-D-glucose(in) + L-histidyl-[protein]. Its function is as follows. The phosphoenolpyruvate-dependent sugar phosphotransferase system (sugar PTS), a major carbohydrate active transport system, catalyzes the phosphorylation of incoming sugar substrates concomitantly with their translocation across the cell membrane. The enzyme II CelABD PTS system is involved in cellobiose transport. The protein is PTS system cellobiose-specific EIIB component of Aeromonas hydrophila.